A 163-amino-acid polypeptide reads, in one-letter code: Large ribosomal subunit protein uL10 (163 aa).

Belongs to the universal ribosomal protein uL10 family. As to quaternary structure, part of the ribosomal stalk of the 50S ribosomal subunit. The N-terminus interacts with L11 and the large rRNA to form the base of the stalk. The C-terminus forms an elongated spine to which L12 dimers bind in a sequential fashion forming a multimeric L10(L12)X complex.

Forms part of the ribosomal stalk, playing a central role in the interaction of the ribosome with GTP-bound translation factors. This is Large ribosomal subunit protein uL10 from Haemophilus influenzae (strain 86-028NP).